A 213-amino-acid polypeptide reads, in one-letter code: Glutathione S-transferase DHAR1, mitochondrial (213 aa).

Positions 8 and 19 each coordinate glutathione. Residues Lys-8 and Asp-19 each coordinate L-ascorbate. Positions 10–83 (AVGAPDHLGD…DVIVGILEEK (74 aa)) constitute a GST N-terminal domain. Cys-20 (nucleophile) is an active-site residue. Residue Cys-20 is modified to S-glutathionyl cysteine. The short motif at 20-25 (CPFSQR) is the Glutathione-binding element. Positions 47, 60, and 73 each coordinate glutathione. The GST C-terminal domain maps to 84–213 (YPDPPLKTPA…ISGWAPKVNP (130 aa)). A Copper-binding motif is present at residues 133–137 (HLKSH). The glutathione site is built by His-160 and Trp-207. Lys-210 is a binding site for L-ascorbate.

This sequence belongs to the GST superfamily. DHAR family. As to quaternary structure, monomer. Interacts with copper (Cu). Post-translationally, spontaneous S-glutathionylation in the presence of oxidized glutathione (GSSG). In terms of tissue distribution, expressed at least in roots and leaves.

Its subcellular location is the mitochondrion. It is found in the cytoplasm. It localises to the cytosol. The protein localises to the peroxisome. The protein resides in the membrane. The enzyme catalyses RX + glutathione = an S-substituted glutathione + a halide anion + H(+). It catalyses the reaction L-dehydroascorbate + 2 glutathione = glutathione disulfide + L-ascorbate. Functionally, displays a dual function. As a soluble protein, exhibits glutathione-dependent thiol transferase and dehydroascorbate (DHA) reductase activities. Key component of the ascorbate recycling system. Involved in the redox homeostasis, especially in scavenging of ROS under oxidative stresses, subsequently to biotic or abiotic inducers. As a peripheral membrane protein, could also function as voltage-gated ion channel. This Arabidopsis thaliana (Mouse-ear cress) protein is Glutathione S-transferase DHAR1, mitochondrial.